A 112-amino-acid chain; its full sequence is Putative inner membrane protein YafU (112 aa).

Residues 1-21 (MSSERDLVNFLGDFSMDVAKA) are Cytoplasmic-facing. Residues 22–42 (VIAGGVATAIGSLASFACVSF) form a helical membrane-spanning segment. A topological domain (periplasmic) is located at residue Gly43. Residues 44–64 (FPVILVGGAILLTGIVCTVVL) traverse the membrane as a helical segment. Residues 65-112 (NEIDAQCHLSEKLKYAIRDGLKRQQELDKWKRENMTPFMYVLNTPPVI) are Cytoplasmic-facing.

The protein resides in the cell inner membrane. The protein is Putative inner membrane protein YafU (yafU) of Escherichia coli (strain K12).